The primary structure comprises 119 residues: uncharacterized protein (119 aa).

The stretch at 63 to 104 (KKIKKELESNSEKRKAALQMIKEEHTAKVDRYKMIIEDLRQQ) forms a coiled coil.

This is an uncharacterized protein from Bacillus subtilis (strain 168).